We begin with the raw amino-acid sequence, 263 residues long: MDRKIVIPGQLLSEKKEMAGPGTYVKNGNIYSLLYGIANFKGRVSVVPFSGKYIPSRKDFIIVNVIDVTPSNWIMETGSPYDGLLHVSEFPKRVDSSEMRKFMDVGDCVIVRVKDVSKAMKVELSMREQGSRALSKGRIIEVVPSKVPRVIGHGGSMVSILKKESNCDVFVGKNGRIWINGKDKDMDRLTTAIEMIESESHMSGLTDKVGMFLRGEPEGTEGSDEEQLVDEEVAGVSLEDDDVTEETSRKVDVLLDNDTDETN.

Positions Gly51–Arg127 constitute an S1 motif domain. Positions Ser135–Ile196 constitute a KH domain. Residues Leu213–Asn263 are disordered. The span at Glu218–Glu245 shows a compositional bias: acidic residues.

Belongs to the RRP4 family. As to quaternary structure, component of the archaeal exosome complex. Forms a trimer of Rrp4 and/or Csl4 subunits. The trimer associates with a hexameric ring-like arrangement composed of 3 Rrp41-Rrp42 heterodimers.

Its subcellular location is the cytoplasm. Its function is as follows. Non-catalytic component of the exosome, which is a complex involved in RNA degradation. Increases the RNA binding and the efficiency of RNA degradation. Confers strong poly(A) specificity to the exosome. This is Exosome complex component Rrp4 from Methanococcoides burtonii (strain DSM 6242 / NBRC 107633 / OCM 468 / ACE-M).